We begin with the raw amino-acid sequence, 385 residues long: uncharacterized protein (385 aa).

This is an uncharacterized protein from Caenorhabditis elegans.